The chain runs to 1270 residues: Myosin-binding protein C, cardiac-type (1270 aa).

At Met1 the chain carries N-acetylmethionine. Residues 1–24 form a disordered region; sequence MPEPGKKPVSAFNKKPRSAEVTAG. Residues Ser47 and Ser72 each carry the phosphoserine modification. Positions 94-105 are enriched in basic and acidic residues; it reads VTEPAPPEKAES. The segment at 94 to 152 is disordered; it reads VTEPAPPEKAESEVAPGAPEEVPAPATELEESVSSPEGSVSVTQDGSAAEHQGAPDDPI. A compositionally biased stretch (low complexity) spans 106 to 135; it reads EVAPGAPEEVPAPATELEESVSSPEGSVSV. The 104-residue stretch at 151-254 folds into the Ig-like C2-type 1 domain; the sequence is PIGLFLMRPQ…FDSCNFNLTV (104 aa). Zn(2+) is bound by residues Gln206, His208, Glu221, and His223. Phosphoserine; by PKA and PKC is present on residues Ser273, Ser282, and Ser302. Ser307 and Ser423 each carry phosphoserine. 4 Ig-like C2-type domains span residues 358-448, 449-539, 540-629, and 641-767; these read STAF…VKEP, PVLI…VQEK, KLEV…HFME, and PKIH…VIDV. Cys432 and Cys439 are oxidised to a cystine. Residues Ser455 and Ser546 each carry the phosphoserine modification. Thr603 is subject to Phosphothreonine. The segment at 683–702 is disordered; the sequence is VTQGKKASAGPHPDAPEDAG. Fibronectin type-III domains lie at 770–866 and 868–963; these read APAA…IGPP and EPTH…VQEI. The Ig-like C2-type 6 domain occupies 967–1061; it reads PRLQLPRHLR…ATLILQIVDK (95 aa). The Fibronectin type-III 3 domain occupies 1064–1159; it reads PPQDIRIVET…TKEPVFIPRP (96 aa). Residues 1177–1270 form the Ig-like C2-type 7 domain; it reads PSFTQPLANR…ECRLEVRVPQ (94 aa). Arg1237 is modified (omega-N-methylarginine).

It belongs to the immunoglobulin superfamily. MyBP family. Substrate for phosphorylation by PKA and PKC. Reversible phosphorylation appears to modulate contraction. Post-translationally, polyubiquitinated.

Thick filament-associated protein located in the crossbridge region of vertebrate striated muscle a bands. In vitro it binds MHC, F-actin and native thin filaments, and modifies the activity of actin-activated myosin ATPase. It may modulate muscle contraction or may play a more structural role. This Mus musculus (Mouse) protein is Myosin-binding protein C, cardiac-type (Mybpc3).